Here is a 120-residue protein sequence, read N- to C-terminus: UPF0145 protein UNCMA_30400 (120 aa).

This sequence belongs to the UPF0145 family.

This Methanocella arvoryzae (strain DSM 22066 / NBRC 105507 / MRE50) protein is UPF0145 protein UNCMA_30400.